A 225-amino-acid chain; its full sequence is Uracil-DNA glycosylase (225 aa).

Residue D65 is the Proton acceptor of the active site.

This sequence belongs to the uracil-DNA glycosylase (UDG) superfamily. UNG family.

The protein localises to the cytoplasm. It carries out the reaction Hydrolyzes single-stranded DNA or mismatched double-stranded DNA and polynucleotides, releasing free uracil.. Its function is as follows. Excises uracil residues from the DNA which can arise as a result of misincorporation of dUMP residues by DNA polymerase or due to deamination of cytosine. The polypeptide is Uracil-DNA glycosylase (Clostridium perfringens (strain ATCC 13124 / DSM 756 / JCM 1290 / NCIMB 6125 / NCTC 8237 / Type A)).